The following is a 152-amino-acid chain: Siroheme decarboxylase NirD subunit (152 aa).

This sequence belongs to the Ahb/Nir family. As to quaternary structure, probably forms a complex composed of NirD, NirL, NirG and NirH. All proteins are required for the total conversion of siroheme to didecarboxysiroheme.

It catalyses the reaction siroheme + 2 H(+) = 12,18-didecarboxysiroheme + 2 CO2. It participates in porphyrin-containing compound metabolism. Functionally, involved in heme d1 biosynthesis. Catalyzes the decarboxylation of siroheme into didecarboxysiroheme. This is Siroheme decarboxylase NirD subunit from Stutzerimonas stutzeri (Pseudomonas stutzeri).